The sequence spans 168 residues: Cell division inhibitor SulA (168 aa).

Residues 1–20 (MSTQSVSSHNIESSSFSANQ) form a disordered region. A ftsZ binding region spans residues 105-111 (ALLTGNY). Positions 161-168 (KIHSTLYH) are lon protease binding.

The protein belongs to the SulA family. As to quaternary structure, interacts with FtsZ. Post-translationally, is rapidly cleaved and degraded by the Lon protease once DNA damage is repaired.

Its function is as follows. Component of the SOS system and an inhibitor of cell division. Accumulation of SulA causes rapid cessation of cell division and the appearance of long, non-septate filaments. In the presence of GTP, binds a polymerization-competent form of FtsZ in a 1:1 ratio, thus inhibiting FtsZ polymerization and therefore preventing it from participating in the assembly of the Z ring. This mechanism prevents the premature segregation of damaged DNA to daughter cells during cell division. The protein is Cell division inhibitor SulA of Pectobacterium atrosepticum (strain SCRI 1043 / ATCC BAA-672) (Erwinia carotovora subsp. atroseptica).